We begin with the raw amino-acid sequence, 461 residues long: D-phenylhydantoinase (461 aa).

Residues His-59, His-61, and Lys-151 each contribute to the a divalent metal cation site. Lys-151 is modified (N6-carboxylysine). Tyr-156 contacts substrate. Positions 182 and 239 each coordinate a divalent metal cation. Ser-286 is a substrate binding site. Asp-313 is a binding site for a divalent metal cation. Asn-335 contacts substrate.

It belongs to the metallo-dependent hydrolases superfamily. Hydantoinase/dihydropyrimidinase family. In terms of assembly, homotetramer. The cofactor is a divalent metal cation. Carboxylation allows a single lysine to coordinate two divalent metal cations.

It carries out the reaction D-5-phenylhydantoin + H2O = N-carbamoyl-D-phenylglycine + H(+). Functionally, catalyzes the stereospecific hydrolysis of the cyclic amide bond of D-hydantoin derivatives with an aromatic side chains at the 5'-position. Has no activity on dihydropyrimidines. The physiological function is unknown. The polypeptide is D-phenylhydantoinase (Escherichia coli (strain SE11)).